The chain runs to 550 residues: Chaperonin GroEL (550 aa).

ATP contacts are provided by residues 30–33 (TLGP), lysine 51, 87–91 (DGTTT), glycine 415, and aspartate 496. Residues 526 to 550 (PEDEKMPPMPPGGGMGGMGGMGGMY) form a disordered region. A compositionally biased stretch (gly residues) spans 537–550 (GGGMGGMGGMGGMY).

It belongs to the chaperonin (HSP60) family. As to quaternary structure, forms a cylinder of 14 subunits composed of two heptameric rings stacked back-to-back. Interacts with the co-chaperonin GroES.

It localises to the cytoplasm. The catalysed reaction is ATP + H2O + a folded polypeptide = ADP + phosphate + an unfolded polypeptide.. In terms of biological role, together with its co-chaperonin GroES, plays an essential role in assisting protein folding. The GroEL-GroES system forms a nano-cage that allows encapsulation of the non-native substrate proteins and provides a physical environment optimized to promote and accelerate protein folding. The chain is Chaperonin GroEL from Chloroherpeton thalassium (strain ATCC 35110 / GB-78).